Consider the following 351-residue polypeptide: Autoinducer 2 import system permease protein LsrC (351 aa).

9 consecutive transmembrane segments (helical) span residues 14-34 (LLAILTLFALLGIIDRNYFSL), 39-59 (MIFSSAQILILLAIGATLVML), 70-90 (ITGLCAVTVGMALNAGFGLVA), 93-113 (LFALLVGMVAGFFNGILVTWL), 115-135 (IPAIVATLGTLGLYRGLMLLL), 155-175 (ILFSISPIGWLTMLLILAMAW), 213-233 (MNGVMAALAGIVFASQIGFIP), 252-272 (GISLLGGTGTIIGAILGAFLL), and 284-304 (LPAWWNDFIAGLVLLGVLVFD).

The protein belongs to the binding-protein-dependent transport system permease family. AraH/RbsC subfamily. The complex is composed of two ATP-binding proteins (LsrA), two transmembrane proteins (LsrC and LsrD) and a solute-binding protein (LsrB).

It is found in the cell inner membrane. Part of the ABC transporter complex LsrABCD involved in autoinducer 2 (AI-2) import. Probably responsible for the translocation of the substrate across the membrane. The polypeptide is Autoinducer 2 import system permease protein LsrC (lsrC) (Yersinia pseudotuberculosis serotype O:3 (strain YPIII)).